The following is a 600-amino-acid chain: Zinc metalloproteinase-disintegrin-like cobrin (600 aa).

Residues Met1–Ser8 form the signal peptide. Residues Ile9–Leu179 constitute a propeptide that is removed on maturation. In terms of domain architecture, Peptidase M12B spans Lys193–Pro388. Positions 196 and 280 each coordinate Ca(2+). Disulfide bonds link Cys304–Cys383, Cys344–Cys367, and Cys346–Cys351. Zn(2+) is bound by residues His329, His333, and His339. 8 residues coordinate Ca(2+): Cys383, Asn386, Ile398, Asn401, Phe403, Glu405, Glu408, and Asp411. The Disintegrin domain occupies Pro396 to Asn482. Cystine bridges form between Cys399–Cys428, Cys410–Cys423, Cys412–Cys418, Cys422–Cys445, Cys436–Cys442, Cys441–Cys467, Cys454–Cys474, Cys461–Cys492, Cys486–Cys497, Cys504–Cys554, Cys519–Cys562, Cys532–Cys542, Cys549–Cys588, and Cys582–Cys593. An N-linked (GlcNAc...) asparagine glycan is attached at Asn424. A D/ECD-tripeptide motif is present at residues Asp460–Asp462. Residues Asp462, Leu463, Glu465, Asp477, and Val478 each contribute to the Ca(2+) site.

Belongs to the venom metalloproteinase (M12B) family. P-III subfamily. P-IIIa sub-subfamily. In terms of assembly, monomer. The cofactor is Zn(2+). Expressed by the venom gland.

The protein resides in the secreted. Snake venom zinc metalloproteinase that may cleave complement protein C3 into C3c-like (C3o). The polypeptide is Zinc metalloproteinase-disintegrin-like cobrin (Naja kaouthia (Monocled cobra)).